The primary structure comprises 49 residues: Large ribosomal subunit protein bL33D (49 aa).

The protein belongs to the bacterial ribosomal protein bL33 family.

This is Large ribosomal subunit protein bL33D (rpmG4) from Enterococcus faecalis (strain ATCC 700802 / V583).